We begin with the raw amino-acid sequence, 1377 residues long: DNA-directed RNA polymerase subunit beta (1377 aa).

Belongs to the RNA polymerase beta chain family. In terms of assembly, the RNAP catalytic core consists of 2 alpha, 1 beta, 1 beta' and 1 omega subunit. When a sigma factor is associated with the core the holoenzyme is formed, which can initiate transcription.

It carries out the reaction RNA(n) + a ribonucleoside 5'-triphosphate = RNA(n+1) + diphosphate. In terms of biological role, DNA-dependent RNA polymerase catalyzes the transcription of DNA into RNA using the four ribonucleoside triphosphates as substrates. This is DNA-directed RNA polymerase subunit beta from Campylobacter lari (strain RM2100 / D67 / ATCC BAA-1060).